Reading from the N-terminus, the 993-residue chain is Replication protein 1a (993 aa).

Residues 51–409 are methyltransferase; that stretch reads NVLGVKDSEV…TIVINGMSMQ (359 aa). The Alphavirus-like MT domain occupies 72-290; that stretch reads HLTQQEFAPH…HDWENIKSFL (219 aa). The interval 545-576 is disordered; the sequence is SDRPEAPSSTPDDTADVCGKEQEVSELDSLSA. Positions 687–838 constitute a (+)RNA virus helicase ATP-binding domain; sequence CVICNSESLS…KIIPDETSDA (152 aa). The tract at residues 712–975 is ATP-dependent helicase; that stretch reads VDGVAGCGKT…LTRHKVTFRY (264 aa). Residue 714–721 coordinates ATP; that stretch reads GVAGCGKT. Residues 839–993 form the (+)RNA virus helicase C-terminal domain; it reads DTTFRSPQDV…DLIAECIARA (155 aa).

It belongs to the bromoviridae replication protein 1a family. Interacts with RNA-directed RNA polymerase 2a.

The protein localises to the host endoplasmic reticulum membrane. Its function is as follows. Involved in the virus replication. Contains a helicase domain and a methyltransferase domain. The methyltransferase domain is probably involved in viral RNA capping. Involved in the formation of ER membrane spherular invaginations in which RNA replication complexes form. The sequence is that of Replication protein 1a from Cucumis sativus (Cucumber).